A 357-amino-acid polypeptide reads, in one-letter code: UDP-N-acetylglucosamine--N-acetylmuramyl-(pentapeptide) pyrophosphoryl-undecaprenol N-acetylglucosamine transferase (357 aa).

Residues R166, S196, and Q290 each coordinate UDP-N-acetyl-alpha-D-glucosamine.

It belongs to the glycosyltransferase 28 family. MurG subfamily.

It localises to the cell membrane. It catalyses the reaction Mur2Ac(oyl-L-Ala-gamma-D-Glu-L-Lys-D-Ala-D-Ala)-di-trans,octa-cis-undecaprenyl diphosphate + UDP-N-acetyl-alpha-D-glucosamine = beta-D-GlcNAc-(1-&gt;4)-Mur2Ac(oyl-L-Ala-gamma-D-Glu-L-Lys-D-Ala-D-Ala)-di-trans,octa-cis-undecaprenyl diphosphate + UDP + H(+). It participates in cell wall biogenesis; peptidoglycan biosynthesis. Its function is as follows. Cell wall formation. Catalyzes the transfer of a GlcNAc subunit on undecaprenyl-pyrophosphoryl-MurNAc-pentapeptide (lipid intermediate I) to form undecaprenyl-pyrophosphoryl-MurNAc-(pentapeptide)GlcNAc (lipid intermediate II). The polypeptide is UDP-N-acetylglucosamine--N-acetylmuramyl-(pentapeptide) pyrophosphoryl-undecaprenol N-acetylglucosamine transferase (Staphylococcus epidermidis (strain ATCC 35984 / DSM 28319 / BCRC 17069 / CCUG 31568 / BM 3577 / RP62A)).